We begin with the raw amino-acid sequence, 367 residues long: Protein valois (367 aa).

WD repeat units lie at residues 101 to 139 (QAEH…RDSQ), 152 to 192 (AHPT…MVST), and 198 to 238 (SHTD…PSST). The interval 309–367 (LAAMSNLPASVKVANVQAGHEFIYTHQDTHSRLTDAVWTDDSTLITIGHGRKMVTHAIK) is interaction with csul.

As to quaternary structure, interacts with csul and tud. In terms of tissue distribution, in oocytes, localizes to pole plasm and nuage (at protein level). Expressed stronger in the germline than in somatic cells. In the germarium it sometimes concentrates in perinuclear aggregates that disappear by stage 2 of oogenesis. At later stages, it is uniformly distributed in the nurse cells and oocyte, as well as in young embryos, with no particular enrichment at the posterior or inside the pole cells (at protein level).

The protein resides in the cytoplasm. Functionally, involved in specific localization of cytoplasmic proteins during the formation of pole plasm. Required for synthesis and/or stability of oskar protein (osk) and localization of tudor (tud) in both the nuage and posterior pole of the oocyte. Required for normal posterior localization of osk in later stages of oogenesis and for posterior localization of the vasa (vas) protein during the entire process of pole plasm assembly. May act by regulating the complex that contains the arginine N-methyltransferase csul. The protein is Protein valois (vls) of Drosophila melanogaster (Fruit fly).